Reading from the N-terminus, the 1784-residue chain is Protein mel-28 (1784 aa).

The segment at 1–956 is required for nuclear envelope and kinetochore localization; it reads MDNENSSIFK…QNDDEDMPEV (956 aa). Residues 566 to 778 form a required for association with mitotic chromosomes region; sequence GKIEEFCQLA…TSPEDSEHSE (213 aa). The tract at residues 846-1071 is important for nuclear localization; sequence APMTVTIGKH…HNSILKTAKG (226 aa). Disordered regions lie at residues 945-994 and 1115-1784; these read KVQN…AKRI and ETMT…RAKQ. A compositionally biased stretch (basic and acidic residues) spans 1126-1149; sequence GKHDEEKDSEKNVVDEMEEVKDQE. Composition is skewed to acidic residues over residues 1222–1232 and 1266–1278; these read LEEEGEDEDIW and VNEEEVVESEEVQ. Positions 1239–1601 are chromatin binding; that stretch reads FEVQMDEDCE…TTVDPSSSAL (363 aa). Positions 1279–1293 are enriched in basic and acidic residues; that stretch reads QDAKEPEKTEKRQEE. Residues 1297–1306 are compositionally biased toward low complexity; sequence EVMQPVIPEE. Acidic residues predominate over residues 1321–1336; that stretch reads ELQEEPDIVPTGDEDT. A compositionally biased stretch (basic and acidic residues) spans 1337-1351; the sequence is ADKVQEQAVEEDRPP. A compositionally biased stretch (polar residues) spans 1352-1366; it reads SRNTRSSSVQKSTSQ. A compositionally biased stretch (basic and acidic residues) spans 1367 to 1382; it reads VEDRDPKELVEEERPP. Positions 1383–1398 are enriched in polar residues; it reads SRNTRSASVQKSSNQE. Basic and acidic residues predominate over residues 1428 to 1444; that stretch reads KVKDQKPEELIEEDRPP. The span at 1445–1459 shows a compositional bias: polar residues; that stretch reads SRNTRSASAQKTVAA. Residues 1533–1546 are compositionally biased toward low complexity; it reads AAASTSSSRAGSVT. Residues 1566–1576 are compositionally biased toward acidic residues; the sequence is VQEEEEEEAEE. Over residues 1581–1606 the composition is skewed to polar residues; sequence SRSTRSASVKNTTVDPSSSALASTKR. An important for nuclear localization region spans residues 1601-1784; the sequence is LASTKRTTSR…LLRSARRAKQ (184 aa). Residues 1630–1642 constitute a DNA-binding region (a.T hook 1); sequence TPKRGRPAKKDAG. Residues 1630–1784 are required for chromosome segregation, nuclear growth, nucleoplasmic accumulation and cell cycle timing, but not required for nuclear envelope and kinetochore localization; the sequence is TPKRGRPAKK…LLRSARRAKQ (155 aa). Polar residues predominate over residues 1716–1735; it reads AGTSKQSRSVTRSRASSIDV. A DNA-binding region (a.T hook 2) is located at residues 1746–1758; that stretch reads KRGRGRPPKTVLE.

In terms of tissue distribution, ubiquitously expressed (at protein level).

It is found in the nucleus. The protein localises to the nucleoplasm. It localises to the nucleus envelope. The protein resides in the nucleus inner membrane. Its subcellular location is the nuclear pore complex. It is found in the chromosome. The protein localises to the centromere. It localises to the kinetochore. Functionally, nuclear envelope protein which has essential roles in assembly of nuclear pore complexes and in chromatin maintenance during the cell cycle. Appears to be a stable structural component of the nuclear envelope during interphase. In dividing cells, localizes to kinetochores during early stages of mitosis and then to chromatin during late mitosis. Important for several mitotic processes including chromosome condensation, kinetochore assembly, chromosome segregation and cell-cycle timing. In postmitotic cells, plays a role in the early steps of nuclear pore complex assembly by recruiting the nucleoporins npp-10 and npp-5 to chromatin. Also involved in meiotic chromosome segregation. May function downstream of the Ran GTPase signaling pathway. The chain is Protein mel-28 from Caenorhabditis elegans.